The sequence spans 759 residues: 1,4-alpha-glucan branching enzyme GlgB (759 aa).

The tract at residues 1–22 (MAKTKGLPKDTAVTPSPHLRPH) is disordered. D422 serves as the catalytic Nucleophile. E475 serves as the catalytic Proton donor.

This sequence belongs to the glycosyl hydrolase 13 family. GlgB subfamily. As to quaternary structure, monomer.

The catalysed reaction is Transfers a segment of a (1-&gt;4)-alpha-D-glucan chain to a primary hydroxy group in a similar glucan chain.. Its pathway is glycan biosynthesis; glycogen biosynthesis. In terms of biological role, catalyzes the formation of the alpha-1,6-glucosidic linkages in glycogen by scission of a 1,4-alpha-linked oligosaccharide from growing alpha-1,4-glucan chains and the subsequent attachment of the oligosaccharide to the alpha-1,6 position. The polypeptide is 1,4-alpha-glucan branching enzyme GlgB (Mycobacterium sp. (strain KMS)).